Reading from the N-terminus, the 306-residue chain is Methionyl-tRNA formyltransferase (306 aa).

108–111 provides a ligand contact to (6S)-5,6,7,8-tetrahydrofolate; it reads SLLP.

The protein belongs to the Fmt family.

It catalyses the reaction L-methionyl-tRNA(fMet) + (6R)-10-formyltetrahydrofolate = N-formyl-L-methionyl-tRNA(fMet) + (6S)-5,6,7,8-tetrahydrofolate + H(+). Its function is as follows. Attaches a formyl group to the free amino group of methionyl-tRNA(fMet). The formyl group appears to play a dual role in the initiator identity of N-formylmethionyl-tRNA by promoting its recognition by IF2 and preventing the misappropriation of this tRNA by the elongation apparatus. The protein is Methionyl-tRNA formyltransferase of Paenarthrobacter aurescens (strain TC1).